We begin with the raw amino-acid sequence, 165 residues long: Lipoprotein signal peptidase (165 aa).

3 consecutive transmembrane segments (helical) span residues 9 to 29 (FLAISFFVLIDWVSKLAVLLY), 69 to 89 (KYFLFAIRIAIILGILAFLFL), and 98 to 118 (IRFSLILLCSGAIGNVGDILF). Residues Asp124 and Asp142 contribute to the active site. Residues 133–153 (WYFPTFNFADIFISLGTFIFV) form a helical membrane-spanning segment.

This sequence belongs to the peptidase A8 family.

The protein resides in the cell inner membrane. It carries out the reaction Release of signal peptides from bacterial membrane prolipoproteins. Hydrolyzes -Xaa-Yaa-Zaa-|-(S,diacylglyceryl)Cys-, in which Xaa is hydrophobic (preferably Leu), and Yaa (Ala or Ser) and Zaa (Gly or Ala) have small, neutral side chains.. The protein operates within protein modification; lipoprotein biosynthesis (signal peptide cleavage). Functionally, this protein specifically catalyzes the removal of signal peptides from prolipoproteins. This Chlamydia caviae (strain ATCC VR-813 / DSM 19441 / 03DC25 / GPIC) (Chlamydophila caviae) protein is Lipoprotein signal peptidase.